The chain runs to 414 residues: Isocitrate dehydrogenase [NADP] cytoplasmic (414 aa).

Ser-2 is subject to N-acetylserine. At Tyr-42 the chain carries Phosphotyrosine. NADP(+) is bound at residue 75–77; it reads TIT. Thr-77 is a binding site for substrate. Lys-81 carries the N6-acetyllysine modification. Arg-82 is an NADP(+) binding site. Substrate contacts are provided by residues 94-100 and Arg-109; that span reads SPNGTIR. Lys-126 bears the N6-succinyllysine mark. Substrate is bound by residues Arg-132 and Lys-212. Residues Lys-224, Lys-233, and Lys-243 each carry the N6-acetyllysine modification. Residue Asp-252 participates in Mn(2+) binding. Lys-260 lines the NADP(+) pocket. Residues Asp-275 and Asp-279 each contribute to the Mn(2+) site. Residue 310–315 coordinates NADP(+); sequence GTVTRH. Lys-321 is modified (N6-acetyllysine). Residue Asn-328 coordinates NADP(+). Position 389 is a phosphoserine (Ser-389). Lys-400 carries the post-translational modification N6-succinyllysine.

This sequence belongs to the isocitrate and isopropylmalate dehydrogenases family. In terms of assembly, homodimer. The cofactor is Mg(2+). Mn(2+) is required as a cofactor. In terms of processing, the N-terminus is blocked. Acetylation at Lys-374 dramatically reduces catalytic activity. As to expression, ubiquitous.

It localises to the cytoplasm. The protein localises to the cytosol. Its subcellular location is the peroxisome. The enzyme catalyses D-threo-isocitrate + NADP(+) = 2-oxoglutarate + CO2 + NADPH. In terms of biological role, catalyzes the NADP(+)-dependent oxidative decarboxylation of isocitrate (D-threo-isocitrate) to 2-ketoglutarate (2-oxoglutarate), which is required by other enzymes such as the phytanoyl-CoA dioxygenase. Plays a critical role in the generation of NADPH, an important cofactor in many biosynthesis pathways. May act as a corneal epithelial crystallin and may be involved in maintaining corneal epithelial transparency. In Rattus norvegicus (Rat), this protein is Isocitrate dehydrogenase [NADP] cytoplasmic (Idh1).